A 73-amino-acid polypeptide reads, in one-letter code: Putative defensin-like protein 57 (73 aa).

Positions 1–25 (MRFTSMIFVLVVILINSLFNFNVLA) are cleaved as a signal peptide. 4 cysteine pairs are disulfide-bonded: cysteine 37-cysteine 71, cysteine 41-cysteine 64, cysteine 50-cysteine 69, and cysteine 54-cysteine 70.

Belongs to the DEFL family.

The protein resides in the secreted. This Arabidopsis thaliana (Mouse-ear cress) protein is Putative defensin-like protein 57.